We begin with the raw amino-acid sequence, 92 residues long: Small ribosomal subunit protein uS19 (92 aa).

The protein belongs to the universal ribosomal protein uS19 family.

In terms of biological role, protein S19 forms a complex with S13 that binds strongly to the 16S ribosomal RNA. In Bacillus pumilus (strain SAFR-032), this protein is Small ribosomal subunit protein uS19.